Consider the following 319-residue polypeptide: Cytochrome c biogenesis protein CcsA (319 aa).

7 helical membrane passes run 9–29 (ILTHISFSLVSIGITIFLITL), 44–64 (GVIGTFLCITGLLVTRWAYSG), 71–91 (LYESLLFLSWSFAIIHMFPYF), 143–163 (MVLGYAALLCGSLLSVALLVI), 225–245 (IISLGFIFLTIGILSGAVWAN), 259–273 (TWAFITWTMFAIYLH), and 286–306 (AIVAFLGFIIIWICYFGVNLL).

This sequence belongs to the CcmF/CycK/Ccl1/NrfE/CcsA family. In terms of assembly, may interact with Ccs1.

Its subcellular location is the plastid. The protein localises to the chloroplast thylakoid membrane. In terms of biological role, required during biogenesis of c-type cytochromes (cytochrome c6 and cytochrome f) at the step of heme attachment. In Oenothera glazioviana (Large-flowered evening primrose), this protein is Cytochrome c biogenesis protein CcsA.